The sequence spans 350 residues: Protein-glutamate methylesterase/protein-glutamine glutaminase 1 (350 aa).

The 119-residue stretch at 3 to 121 (KVLIVEDSPV…RDYDIRARDL (119 aa)) folds into the Response regulatory domain. Position 54 is a 4-aspartylphosphate (Asp-54). Residues 148 to 342 (PASGEPDIGK…PPEKIARVLV (195 aa)) form the CheB-type methylesterase domain. Residues Ser-170, His-197, and Asp-290 contribute to the active site.

It belongs to the CheB family. Phosphorylated by CheA. Phosphorylation of the N-terminal regulatory domain activates the methylesterase activity.

It localises to the cytoplasm. The catalysed reaction is [protein]-L-glutamate 5-O-methyl ester + H2O = L-glutamyl-[protein] + methanol + H(+). It catalyses the reaction L-glutaminyl-[protein] + H2O = L-glutamyl-[protein] + NH4(+). Its function is as follows. Involved in chemotaxis. Part of a chemotaxis signal transduction system that modulates chemotaxis in response to various stimuli. Catalyzes the demethylation of specific methylglutamate residues introduced into the chemoreceptors (methyl-accepting chemotaxis proteins or MCP) by CheR. Also mediates the irreversible deamidation of specific glutamine residues to glutamic acid. This chain is Protein-glutamate methylesterase/protein-glutamine glutaminase 1, found in Syntrophus aciditrophicus (strain SB).